A 183-amino-acid polypeptide reads, in one-letter code: Putative ribosomal N-acetyltransferase YdaF (183 aa).

Residues 10-176 (ITIRLLEPKD…HDLVYYSLLK (167 aa)) form the N-acetyltransferase domain.

Belongs to the acetyltransferase family. In terms of assembly, homohexamer, and homodimer.

In terms of biological role, putative N-acetyltransferase. May act on ribosomal proteins (Potential). This Bacillus subtilis (strain 168) protein is Putative ribosomal N-acetyltransferase YdaF (ydaF).